Here is a 401-residue protein sequence, read N- to C-terminus: MPPSVRYFFIVSVTTVIVFIVLYVLSFGGDQSYQKLNISDSVMLAQVCSSFIDGKSRFLWRNKLMIHEKPSCTEYVTQSHYITAPLSQEEVDFPLAYVMVIHHNFDTFARLFRAIFMPQNIYCVHVDEKATAEFKGAVEQLVSCFPNAFLASKMEPVVYGGISRLQADLNCIKDLSTSEVPWKYAINTCGQDFPLKTNKEIVQYLKGLKGKNLTPGVLPPAHAIGRTRYVHREHLSKELSYVIRTTALKPPPPHNLTIYFGSAYVALSREFANFVLRDPRAVDLLHWSKDTFSPDEHFWVTLNRIPGVPGSMPPNASWTGNLRAVKWMDMEAKHGGCHGHYVHGICIYGNGDLQWLINSQSLFANKFELNTYPLTVECLELRLRERTLNQSEIAIQPSWYF.

The Cytoplasmic segment spans residues 1–7; it reads MPPSVRY. Residues 8–28 traverse the membrane as a helical; Signal-anchor for type II membrane protein segment; the sequence is FFIVSVTTVIVFIVLYVLSFG. The Lumenal segment spans residues 29-401; sequence GDQSYQKLNI…EIAIQPSWYF (373 aa). 4 N-linked (GlcNAc...) asparagine glycosylation sites follow: Asn37, Asn255, Asn315, and Asn389.

It belongs to the glycosyltransferase 14 family.

It localises to the golgi apparatus membrane. It carries out the reaction a beta-D-Gal-(1-&gt;4)-beta-D-GlcNAc-(1-&gt;3)-beta-D-Gal-(1-&gt;4)-beta-D-GlcNAc derivative + UDP-N-acetyl-alpha-D-glucosamine = a beta-D-Gal-(1-&gt;4)-beta-D-GlcNAc-(1-&gt;3)-[beta-D-GlcNAc-(1-&gt;6)]-beta-D-Gal-(1-&gt;4)-N-acetyl-beta-D-glucosaminyl derivative + UDP + H(+). It participates in protein modification; protein glycosylation. Functionally, branching enzyme that converts linear into branched poly-N-acetyllactosaminoglycans. Introduces the blood group I antigen during embryonic development. It is closely associated with the development and maturation of erythroid cells. This Mus musculus (Mouse) protein is N-acetyllactosaminide beta-1,6-N-acetylglucosaminyl-transferase (Gcnt2).